A 372-amino-acid chain; its full sequence is Spermidine/putrescine import ATP-binding protein PotA (372 aa).

An ABC transporter domain is found at 11–241; sequence IELRSIKKSY…PANLFVARFI (231 aa). 43–50 provides a ligand contact to ATP; sequence GPSGCGKT.

This sequence belongs to the ABC transporter superfamily. Spermidine/putrescine importer (TC 3.A.1.11.1) family. The complex is composed of two ATP-binding proteins (PotA), two transmembrane proteins (PotB and PotC) and a solute-binding protein (PotD).

The protein resides in the cell inner membrane. It carries out the reaction ATP + H2O + polyamine-[polyamine-binding protein]Side 1 = ADP + phosphate + polyamineSide 2 + [polyamine-binding protein]Side 1.. Functionally, part of the ABC transporter complex PotABCD involved in spermidine/putrescine import. Responsible for energy coupling to the transport system. This chain is Spermidine/putrescine import ATP-binding protein PotA, found in Haemophilus influenzae (strain 86-028NP).